The sequence spans 214 residues: Large ribosomal subunit protein uL3 (214 aa).

The disordered stretch occupies residues 133–153; the sequence is GRATHGNSRSHNVPGSIGMAQ. Gln153 bears the N5-methylglutamine mark.

This sequence belongs to the universal ribosomal protein uL3 family. As to quaternary structure, part of the 50S ribosomal subunit. Forms a cluster with proteins L14 and L19. Post-translationally, methylated by PrmB.

Functionally, one of the primary rRNA binding proteins, it binds directly near the 3'-end of the 23S rRNA, where it nucleates assembly of the 50S subunit. This is Large ribosomal subunit protein uL3 from Cupriavidus metallidurans (strain ATCC 43123 / DSM 2839 / NBRC 102507 / CH34) (Ralstonia metallidurans).